Here is a 208-residue protein sequence, read N- to C-terminus: uncharacterized protein (208 aa).

This is an uncharacterized protein from Ictalurid herpesvirus 1 (strain Auburn) (IcHV-1).